Here is a 635-residue protein sequence, read N- to C-terminus: Threonine--tRNA ligase (635 aa).

Residues 1–61 enclose the TGS domain; the sequence is MITVRLPDGS…EKDSDLAIIT (61 aa). The tract at residues 242–533 is catalytic; that stretch reads DHRKLGKQLD…LIEHYAGALP (292 aa). Zn(2+) is bound by residues cysteine 333, histidine 384, and histidine 510.

Belongs to the class-II aminoacyl-tRNA synthetase family. In terms of assembly, homodimer. Zn(2+) is required as a cofactor.

It is found in the cytoplasm. The catalysed reaction is tRNA(Thr) + L-threonine + ATP = L-threonyl-tRNA(Thr) + AMP + diphosphate + H(+). In terms of biological role, catalyzes the attachment of threonine to tRNA(Thr) in a two-step reaction: L-threonine is first activated by ATP to form Thr-AMP and then transferred to the acceptor end of tRNA(Thr). Also edits incorrectly charged L-seryl-tRNA(Thr). The polypeptide is Threonine--tRNA ligase (Janthinobacterium sp. (strain Marseille) (Minibacterium massiliensis)).